We begin with the raw amino-acid sequence, 583 residues long: Fumarate reductase flavoprotein subunit (583 aa).

FAD is bound by residues 11–15 (GGGGA), 35–37 (VSK), 43–51 (SHTVSAEGG), 155–157 (WFA), and Asp-211. His-44 bears the Tele-8alpha-FAD histidine mark. Active-site residues include His-232 and Arg-248. Residues 353–354 (HY), Glu-377, and 388–394 (RLGSNSL) each bind FAD.

The protein belongs to the FAD-dependent oxidoreductase 2 family. FRD/SDH subfamily. In terms of assembly, part of an enzyme complex containing four subunits: a flavoprotein (FrdA), an iron-sulfur protein (FrdB), and two hydrophobic anchor proteins (FrdC and FrdD). FAD is required as a cofactor.

It localises to the cell membrane. The catalysed reaction is a quinone + succinate = fumarate + a quinol. The enzyme catalyses a menaquinone + succinate = a menaquinol + fumarate. The chain is Fumarate reductase flavoprotein subunit (frdA) from Mycobacterium tuberculosis (strain CDC 1551 / Oshkosh).